Reading from the N-terminus, the 446-residue chain is Argininosuccinate synthase (446 aa).

Residues Ala-17 to Ser-25 and Ala-43 each bind ATP. Tyr-99 is an L-citrulline binding site. Residues Gly-129 and Thr-131 each coordinate ATP. L-aspartate is bound by residues Thr-131, Asn-135, and Asp-136. Asn-135 contacts L-citrulline. An ATP-binding site is contributed by Asp-136. Residues Arg-139 and Ser-192 each contribute to the L-citrulline site. Asp-194 serves as a coordination point for ATP. Residues Thr-201, Glu-203, and Glu-280 each contribute to the L-citrulline site.

It belongs to the argininosuccinate synthase family. Type 2 subfamily. As to quaternary structure, homotetramer.

The protein resides in the cytoplasm. It catalyses the reaction L-citrulline + L-aspartate + ATP = 2-(N(omega)-L-arginino)succinate + AMP + diphosphate + H(+). Its pathway is amino-acid biosynthesis; L-arginine biosynthesis; L-arginine from L-ornithine and carbamoyl phosphate: step 2/3. The polypeptide is Argininosuccinate synthase (Methylibium petroleiphilum (strain ATCC BAA-1232 / LMG 22953 / PM1)).